A 238-amino-acid polypeptide reads, in one-letter code: Uridylate kinase (238 aa).

Residue 12–15 (KLSG) coordinates ATP. Glycine 54 is a UMP binding site. Residues glycine 55 and arginine 59 each coordinate ATP. Residues aspartate 74 and 135–142 (TGNPYFTT) each bind UMP. ATP is bound by residues threonine 162, asparagine 163, tyrosine 168, and aspartate 171.

It belongs to the UMP kinase family. Homohexamer.

It localises to the cytoplasm. It catalyses the reaction UMP + ATP = UDP + ADP. Its pathway is pyrimidine metabolism; CTP biosynthesis via de novo pathway; UDP from UMP (UMPK route): step 1/1. Inhibited by UTP. Its function is as follows. Catalyzes the reversible phosphorylation of UMP to UDP. The protein is Uridylate kinase of Bradyrhizobium sp. (strain ORS 278).